The chain runs to 67 residues: Large ribosomal subunit protein bL35 (67 aa).

It belongs to the bacterial ribosomal protein bL35 family.

The polypeptide is Large ribosomal subunit protein bL35 (Synechocystis sp. (strain ATCC 27184 / PCC 6803 / Kazusa)).